The primary structure comprises 1068 residues: Carbamoyl phosphate synthase large chain (1068 aa).

The segment at 1 to 403 (MPKRTDINTI…SLQKALRGLE (403 aa)) is carboxyphosphate synthetic domain. The ATP site is built by Arg-129, Arg-169, Gly-175, Gly-176, Gln-208, Val-210, Glu-215, Gly-241, Val-242, His-243, Gln-285, and Glu-299. Residues 133–328 (KEAMEKIGLS…IAKVAAKLAV (196 aa)) enclose the ATP-grasp 1 domain. Residues Gln-285, Glu-299, and Asn-301 each contribute to the Mg(2+) site. Mn(2+)-binding residues include Gln-285, Glu-299, and Asn-301. Residues 404 to 548 (TGICGFNLMS…YSTYEEECES (145 aa)) are oligomerization domain. The carbamoyl phosphate synthetic domain stretch occupies residues 549–930 (RPSDKKKIMI…AFLKAQLGAN (382 aa)). The 192-residue stretch at 673–864 (QQILHKLHLK…LAKIAARVMA (192 aa)) folds into the ATP-grasp 2 domain. The ATP site is built by Arg-709, His-748, Leu-750, Glu-755, Gly-780, Ile-781, His-782, Ser-783, Gln-823, and Glu-835. Mg(2+) is bound by residues Gln-823, Glu-835, and Asn-837. 3 residues coordinate Mn(2+): Gln-823, Glu-835, and Asn-837. In terms of domain architecture, MGS-like spans 931–1068 (ERIPKTGKVF…SLQDLHQRLL (138 aa)). Residues 931 to 1068 (ERIPKTGKVF…SLQDLHQRLL (138 aa)) are allosteric domain.

It belongs to the CarB family. As to quaternary structure, composed of two chains; the small (or glutamine) chain promotes the hydrolysis of glutamine to ammonia, which is used by the large (or ammonia) chain to synthesize carbamoyl phosphate. Tetramer of heterodimers (alpha,beta)4. The cofactor is Mg(2+). Mn(2+) is required as a cofactor.

It catalyses the reaction hydrogencarbonate + L-glutamine + 2 ATP + H2O = carbamoyl phosphate + L-glutamate + 2 ADP + phosphate + 2 H(+). The catalysed reaction is hydrogencarbonate + NH4(+) + 2 ATP = carbamoyl phosphate + 2 ADP + phosphate + 2 H(+). Its pathway is amino-acid biosynthesis; L-arginine biosynthesis; carbamoyl phosphate from bicarbonate: step 1/1. It participates in pyrimidine metabolism; UMP biosynthesis via de novo pathway; (S)-dihydroorotate from bicarbonate: step 1/3. In terms of biological role, large subunit of the glutamine-dependent carbamoyl phosphate synthetase (CPSase). CPSase catalyzes the formation of carbamoyl phosphate from the ammonia moiety of glutamine, carbonate, and phosphate donated by ATP, constituting the first step of 2 biosynthetic pathways, one leading to arginine and/or urea and the other to pyrimidine nucleotides. The large subunit (synthetase) binds the substrates ammonia (free or transferred from glutamine from the small subunit), hydrogencarbonate and ATP and carries out an ATP-coupled ligase reaction, activating hydrogencarbonate by forming carboxy phosphate which reacts with ammonia to form carbamoyl phosphate. This is Carbamoyl phosphate synthase large chain from Pasteurella multocida (strain Pm70).